The following is an 822-amino-acid chain: Nucleolar complex protein 3 (822 aa).

3 disordered regions span residues 1 to 86 (MGTK…DGDD), 106 to 142 (ANKR…KEQD), and 172 to 199 (KPKQ…EDSD). Over residues 13-23 (RAAHLKSKKTP) the composition is skewed to basic residues. Residues 35-45 (KRDQLKSKREQ) show a composition bias toward basic and acidic residues. The short motif at 41–48 (SKREQGQN) is the Nuclear localization signal element. Residues 76–86 (PLEEDNEDGDD) show a composition bias toward acidic residues. Positions 116 to 126 (TGENDPDQGQS) are enriched in polar residues. Positions 181–199 (EEEEDDSEEDGDTEYEDSD) are enriched in acidic residues. Residue Ser-187 is modified to Phosphoserine. Residue Thr-193 is modified to Phosphothreonine. Residue Ser-198 is modified to Phosphoserine. A coiled-coil region spans residues 445–509 (KIKNVNLDAE…NKQAKHQKLT (65 aa)).

Belongs to the CBF/MAK21 family.

It is found in the nucleus. It localises to the nucleolus. The chain is Nucleolar complex protein 3 from Drosophila melanogaster (Fruit fly).